The chain runs to 300 residues: uncharacterized protein (300 aa).

The N-terminal stretch at 1–19 (MKLKLLLIPLLGSSLLLSA) is a signal peptide. Residue cysteine 20 is the site of N-palmitoyl cysteine attachment. Cysteine 20 is lipidated: S-diacylglycerol cysteine.

It belongs to the MG439/MG440 family.

It is found in the cell membrane. This is an uncharacterized protein from Mycoplasma pneumoniae (strain ATCC 29342 / M129 / Subtype 1) (Mycoplasmoides pneumoniae).